The sequence spans 40 residues: Sauvagin (40 aa).

Pyrrolidone carboxylic acid is present on Gln1. Ile40 bears the Isoleucine amide mark.

The protein belongs to the sauvagine/corticotropin-releasing factor/urotensin I family.

The protein localises to the secreted. Functionally, hypotensive and diuretic peptide. The protein is Sauvagin of Phyllomedusa sauvagei (Sauvage's leaf frog).